A 71-amino-acid chain; its full sequence is Glucose-repressible gene protein (71 aa).

A disordered region spans residues 19 to 71 (TATASKEANKDVAKDSNQGVGTRLNAAGDAISDKVSENKHDAKAEAHKQGATH). Over residues 49-71 (ISDKVSENKHDAKAEAHKQGATH) the composition is skewed to basic and acidic residues.

This is Glucose-repressible gene protein (grg-1) from Neurospora crassa (strain ATCC 24698 / 74-OR23-1A / CBS 708.71 / DSM 1257 / FGSC 987).